The following is a 548-amino-acid chain: DNA ligase (548 aa).

ATP is bound at residue E252. The active-site N6-AMP-lysine intermediate is K254. 6 residues coordinate ATP: R259, R274, E303, F343, R414, and K420.

This sequence belongs to the ATP-dependent DNA ligase family. Mg(2+) is required as a cofactor.

It catalyses the reaction ATP + (deoxyribonucleotide)n-3'-hydroxyl + 5'-phospho-(deoxyribonucleotide)m = (deoxyribonucleotide)n+m + AMP + diphosphate.. Functionally, DNA ligase that seals nicks in double-stranded DNA during DNA replication, DNA recombination and DNA repair. The polypeptide is DNA ligase (Natronomonas pharaonis (strain ATCC 35678 / DSM 2160 / CIP 103997 / JCM 8858 / NBRC 14720 / NCIMB 2260 / Gabara) (Halobacterium pharaonis)).